We begin with the raw amino-acid sequence, 1732 residues long: Serine/threonine-protein kinase MRCK alpha (1732 aa).

One can recognise a Protein kinase domain in the interval 77–343 (FEILKVIGRG…IEDFKKHPFF (267 aa)). ATP-binding positions include 83-91 (IGRGAFGEV) and Lys106. The active-site Proton acceptor is Asp201. 2 positions are modified to phosphoserine; by autocatalysis: Ser222 and Ser234. Thr240 carries the phosphothreonine; by autocatalysis modification. The 71-residue stretch at 344–414 (SGIDWDNIRN…TSSCVLSDRS (71 aa)) folds into the AGC-kinase C-terminal domain. Coiled coils occupy residues 437–820 (NNLA…WEAQ) and 880–943 (LELQ…SEKG). Positions 968-1003 (ERSPSCTPASKGRRTVDSTPLSVHTPTLRKKGCPGS) are disordered. The Phorbol-ester/DAG-type zinc-finger motif lies at 1012-1062 (THQFFVKSFTTPTKCHQCTSLMVGLIRQGCSCEVCGFSCHITCVNKAPTTC). A PH domain is found at 1082–1201 (GTAYEGHVRI…WVGVLSELHK (120 aa)). Position 1127 is a phosphoserine (Ser1127). Residues 1227–1499 (IKTTQAAAII…RPLNNEGSLN (273 aa)) form the CNH domain. Phosphoserine is present on Ser1545. The 14-residue stretch at 1571-1584 (ISNPTNFNHIAHMG) folds into the CRIB domain. The disordered stretch occupies residues 1591–1732 (ILKDLPMNPR…ESTDRGSWDP (142 aa)). A compositionally biased stretch (polar residues) spans 1604–1619 (SRTVFSGSVSIPSITK). Ser1611, Ser1613, Ser1629, Ser1651, Ser1664, Ser1669, and Ser1693 each carry phosphoserine. Over residues 1625–1640 (GRSMSASSGLSARSSA) the composition is skewed to low complexity. Low complexity predominate over residues 1665–1674 (PSEGSLSSGG). A compositionally biased stretch (low complexity) spans 1697–1707 (STASNSSNLSS). Ser1719 and Ser1721 each carry phosphoserine.

The protein belongs to the protein kinase superfamily. AGC Ser/Thr protein kinase family. DMPK subfamily. Homodimer and homotetramer via the coiled coil regions. Interacts tightly with GTP-bound but not GDP-bound CDC42. Forms a tripartite complex with MYO18A and LURAP1 with the latter acting as an adapter connecting CDC42BPA and MYO18A. LURAP1 binding results in activation of CDC42BPA by abolition of its negative autoregulation. Interacts with LURAP1. Interacts (via AGC-kinase C-terminal domain) with FAM89B/LRAP25 (via LRR repeat). Forms a tripartite complex with FAM89B/LRAP25 and LIMK1. Requires Mg(2+) as cofactor. Proteolytically cleaved by caspases upon apoptosis induction. The cleavage at Asp-478 by CASP3 increases its kinase activity (in vitro). As to expression, abundant in the heart, brain, skeletal muscle, kidney, and pancreas, with little or no expression in the lung and liver.

Its subcellular location is the cytoplasm. It localises to the cell projection. The protein localises to the lamellipodium. The enzyme catalyses L-seryl-[protein] + ATP = O-phospho-L-seryl-[protein] + ADP + H(+). It catalyses the reaction L-threonyl-[protein] + ATP = O-phospho-L-threonyl-[protein] + ADP + H(+). Its activity is regulated as follows. Maintained in an inactive, closed conformation by an interaction between the kinase domain and the negative autoregulatory C-terminal coiled-coil region. Agonist binding to the phorbol ester binding site disrupts this, releasing the kinase domain to allow N-terminus-mediated dimerization and kinase activation by transautophosphorylation. Inhibited by chelerythrine chloride. Functionally, serine/threonine-protein kinase which is an important downstream effector of CDC42 and plays a role in the regulation of cytoskeleton reorganization and cell migration. Regulates actin cytoskeletal reorganization via phosphorylation of PPP1R12C and MYL9/MLC2. In concert with MYO18A and LURAP1, is involved in modulating lamellar actomyosin retrograde flow that is crucial to cell protrusion and migration. Phosphorylates: PPP1R12A, LIMK1 and LIMK2. May play a role in TFRC-mediated iron uptake. In concert with FAM89B/LRAP25 mediates the targeting of LIMK1 to the lamellipodium resulting in its activation and subsequent phosphorylation of CFL1 which is important for lamellipodial F-actin regulation. Triggers the formation of an extrusion apical actin ring required for epithelial extrusion of apoptotic cells. This chain is Serine/threonine-protein kinase MRCK alpha, found in Homo sapiens (Human).